The following is a 385-amino-acid chain: D-alanine--D-alanine ligase (385 aa).

The region spanning 165 to 375 (KRVFTSFGLK…YPELVDRLVE (211 aa)) is the ATP-grasp domain. 201-256 (AGEHGWPLFVKPARAGSSIGITKVDDLAGLDEAVAEAQRHDPKIIVEALLRGREIE) is a binding site for ATP. Mg(2+) is bound by residues D329, E342, and N344.

This sequence belongs to the D-alanine--D-alanine ligase family. Requires Mg(2+) as cofactor. Mn(2+) is required as a cofactor.

Its subcellular location is the cytoplasm. It carries out the reaction 2 D-alanine + ATP = D-alanyl-D-alanine + ADP + phosphate + H(+). It participates in cell wall biogenesis; peptidoglycan biosynthesis. Its function is as follows. Cell wall formation. The chain is D-alanine--D-alanine ligase from Streptomyces avermitilis (strain ATCC 31267 / DSM 46492 / JCM 5070 / NBRC 14893 / NCIMB 12804 / NRRL 8165 / MA-4680).